We begin with the raw amino-acid sequence, 341 residues long: Elongation factor Ts (341 aa).

Positions 80-83 are involved in Mg(2+) ion dislocation from EF-Tu; it reads TDFV.

It belongs to the EF-Ts family.

Its subcellular location is the cytoplasm. Functionally, associates with the EF-Tu.GDP complex and induces the exchange of GDP to GTP. It remains bound to the aminoacyl-tRNA.EF-Tu.GTP complex up to the GTP hydrolysis stage on the ribosome. The polypeptide is Elongation factor Ts (Lactobacillus johnsonii (strain CNCM I-12250 / La1 / NCC 533)).